The sequence spans 475 residues: Glycogen synthase (475 aa).

An ADP-alpha-D-glucose-binding site is contributed by lysine 15.

This sequence belongs to the glycosyltransferase 1 family. Bacterial/plant glycogen synthase subfamily.

It carries out the reaction [(1-&gt;4)-alpha-D-glucosyl](n) + ADP-alpha-D-glucose = [(1-&gt;4)-alpha-D-glucosyl](n+1) + ADP + H(+). It functions in the pathway glycan biosynthesis; glycogen biosynthesis. Its function is as follows. Synthesizes alpha-1,4-glucan chains using ADP-glucose. In Chlamydia abortus (strain DSM 27085 / S26/3) (Chlamydophila abortus), this protein is Glycogen synthase.